The chain runs to 529 residues: Ectonucleoside triphosphate diphosphohydrolase 3 (529 aa).

The Cytoplasmic portion of the chain corresponds to 1 to 22; that stretch reads MFTVLTRQPCEQAGLKALYRTP. Residues 23–43 traverse the membrane as a helical segment; sequence TIIALVVLLVSIVVLVSITVI. The Extracellular portion of the chain corresponds to 44-485; that stretch reads QIHKQEVLPP…PLIRLPIEPP (442 aa). Asn-81 is a glycosylation site (N-linked (GlcNAc...) asparagine). A disulfide bridge connects residues Cys-92 and Cys-116. A glycan (N-linked (GlcNAc...) asparagine) is linked at Asn-149. The active-site Proton acceptor is Glu-182. An ATP-binding site is contributed by 222–226; it reads GASTQ. Asn-238 carries an N-linked (GlcNAc...) asparagine glycan. 3 disulfide bridges follow: Cys-261-Cys-308, Cys-289-Cys-334, and Cys-347-Cys-353. N-linked (GlcNAc...) asparagine glycosylation is found at Asn-381, Asn-392, Asn-402, and Asn-454. Cys-399 and Cys-422 are joined by a disulfide. Residues 486-506 traverse the membrane as a helical segment; that stretch reads VFVGTLAFFTAAALLCLAFLA. At 507–529 the chain is on the cytoplasmic side; the sequence is YLCSATRRKRHSEHAFDHAVDSD.

It belongs to the GDA1/CD39 NTPase family. The cofactor is Ca(2+). Requires Mg(2+) as cofactor. In terms of tissue distribution, expressed in adult brain, pancreas, spleen and prostate. Moderate or low expression is seen in most tissues. Not expressed in liver and peripheral blood leukocytes.

It localises to the cell membrane. It carries out the reaction a ribonucleoside 5'-triphosphate + 2 H2O = a ribonucleoside 5'-phosphate + 2 phosphate + 2 H(+). Functionally, has a threefold preference for the hydrolysis of ATP over ADP. The polypeptide is Ectonucleoside triphosphate diphosphohydrolase 3 (ENTPD3) (Homo sapiens (Human)).